The following is a 345-amino-acid chain: uncharacterized protein (345 aa).

A compositionally biased stretch (polar residues) spans 1-13 (MSKPNTETISVNI). Residues 1–23 (MSKPNTETISVNIPESEGVPLPD) form a disordered region. Residues 283 to 316 (SLKQRTNILKKQGETLKKNVEDINKDTSNLKRHA) adopt a coiled-coil conformation.

It is found in the virion. This is an uncharacterized protein from Acanthamoeba polyphaga mimivirus (APMV).